A 486-amino-acid chain; its full sequence is UDP-GalNAc:beta-1,3-N-acetylgalactosaminyltransferase 2 (486 aa).

The Cytoplasmic segment spans residues 1–10; it reads MRHLLFLCPC. The helical; Signal-anchor for type II membrane protein transmembrane segment at 11-31 threads the bilayer; it reads VIGVAFHLWLFNFSGLFSWFL. The Lumenal portion of the chain corresponds to 32–486; the sequence is VWSPHSYDIV…CGNPCACEDR (455 aa). Residues N103 and N160 are each glycosylated (N-linked (GlcNAc...) asparagine).

The protein belongs to the glycosyltransferase 31 family.

It localises to the golgi apparatus membrane. The protein localises to the endoplasmic reticulum. The catalysed reaction is 3-O-(N-acetyl-beta-D-glucosaminyl-(1-&gt;4)-alpha-D-mannosyl)-L-threonyl-[protein] + UDP-N-acetyl-alpha-D-galactosamine = 3-O-[beta-D-GalNAc-(1-&gt;3)-beta-D-GlcNAc-(1-&gt;4)-alpha-D-Man]-L-Thr-[protein] + UDP + H(+). It functions in the pathway protein modification; protein glycosylation. Its function is as follows. Beta-1,3-N-acetylgalactosaminyltransferase that synthesizes a unique carbohydrate structure, GalNAc-beta-1-3GlcNAc, on N- and O-glycans. Has no galactose nor galactosaminyl transferase activity toward any acceptor substrate. Involved in alpha-dystroglycan (dag1) glycosylation. In Xenopus laevis (African clawed frog), this protein is UDP-GalNAc:beta-1,3-N-acetylgalactosaminyltransferase 2 (b3galnt2).